Consider the following 244-residue polypeptide: Vesicle-associated membrane protein-associated protein SCS2 (244 aa).

Position 2 is an N-acetylserine (Ser2). The Cytoplasmic portion of the chain corresponds to 2-222 (SAVEISPDVL…EAATVPAENE (221 aa)). Residues 3-126 (AVEISPDVLV…ISKKIKVKYL (124 aa)) enclose the MSP domain. Ser106 carries the phosphoserine modification. A disordered region spans residues 135–219 (QNQNIQENKE…QIKEAATVPA (85 aa)). A compositionally biased stretch (basic and acidic residues) spans 153 to 168 (SEPKEVPAVVNEKEVP). Over residues 199 to 211 (QTSNSTPAPQNQI) the composition is skewed to polar residues. A helical; Anchor for type IV membrane protein transmembrane segment spans residues 223–243 (SSSMGIFILVALLILVLGWFY). Arg244 is a topological domain (lumenal).

Belongs to the VAMP-associated protein (VAP) (TC 9.B.17) family. Interacts with OPI1. Also interacts with PBI1. Interacts with EPO1.

The protein resides in the endoplasmic reticulum membrane. It is found in the nucleus membrane. In terms of biological role, acts as an endoplasmic reticulum (ER) membrane anchor for cytoplasmic proteins via binding to the FFAT motif of targeted proteins. Regulates phospholipid biosynthesis by modulating the subcellular localization of the transcriptional repressor OPI1. Also contributes to the tethering of the ER to the plasma membrane. Allows interorganelle phosphatidylserine (PtdSer) transport via a process that involves the acceptor membrane complex PDR17-PDS2 that binds to PBI1 which in turn ligates to SCS2 and phosphatidic acid present in the donor membrane, forming a zone of apposition that facilitates PtdSer transfer. This chain is Vesicle-associated membrane protein-associated protein SCS2, found in Saccharomyces cerevisiae (strain ATCC 204508 / S288c) (Baker's yeast).